Here is a 57-residue protein sequence, read N- to C-terminus: Putative antitoxin VapB4 (57 aa).

Functionally, possibly the antitoxin component of a type II toxin-antitoxin (TA) system. Its cognate toxin is VapC4 (Potential). The protein is Putative antitoxin VapB4 (vapB4) of Methanocaldococcus jannaschii (strain ATCC 43067 / DSM 2661 / JAL-1 / JCM 10045 / NBRC 100440) (Methanococcus jannaschii).